A 172-amino-acid polypeptide reads, in one-letter code: Crossover junction endodeoxyribonuclease RuvC (172 aa).

Catalysis depends on residues D12, E71, and D143. Mg(2+)-binding residues include D12, E71, and D143.

The protein belongs to the RuvC family. Homodimer which binds Holliday junction (HJ) DNA. The HJ becomes 2-fold symmetrical on binding to RuvC with unstacked arms; it has a different conformation from HJ DNA in complex with RuvA. In the full resolvosome a probable DNA-RuvA(4)-RuvB(12)-RuvC(2) complex forms which resolves the HJ. Mg(2+) serves as cofactor.

It is found in the cytoplasm. It carries out the reaction Endonucleolytic cleavage at a junction such as a reciprocal single-stranded crossover between two homologous DNA duplexes (Holliday junction).. In terms of biological role, the RuvA-RuvB-RuvC complex processes Holliday junction (HJ) DNA during genetic recombination and DNA repair. Endonuclease that resolves HJ intermediates. Cleaves cruciform DNA by making single-stranded nicks across the HJ at symmetrical positions within the homologous arms, yielding a 5'-phosphate and a 3'-hydroxyl group; requires a central core of homology in the junction. The consensus cleavage sequence is 5'-(A/T)TT(C/G)-3'. Cleavage occurs on the 3'-side of the TT dinucleotide at the point of strand exchange. HJ branch migration catalyzed by RuvA-RuvB allows RuvC to scan DNA until it finds its consensus sequence, where it cleaves and resolves the cruciform DNA. This Coxiella burnetii (strain CbuK_Q154) (Coxiella burnetii (strain Q154)) protein is Crossover junction endodeoxyribonuclease RuvC.